The chain runs to 220 residues: Iron-sulfur cluster repair protein YtfE (220 aa).

It belongs to the RIC family. YtfE subfamily. As to quaternary structure, homodimer.

It localises to the cytoplasm. Di-iron-containing protein involved in the repair of iron-sulfur clusters damaged by oxidative and nitrosative stress conditions. The sequence is that of Iron-sulfur cluster repair protein YtfE from Salmonella choleraesuis (strain SC-B67).